The sequence spans 1226 residues: DNA-directed RNA polymerase subunit beta'' (1226 aa).

Cys-223, Cys-297, Cys-304, and Cys-307 together coordinate Zn(2+).

The protein belongs to the RNA polymerase beta' chain family. RpoC2 subfamily. As to quaternary structure, in plastids the minimal PEP RNA polymerase catalytic core is composed of four subunits: alpha, beta, beta', and beta''. When a (nuclear-encoded) sigma factor is associated with the core the holoenzyme is formed, which can initiate transcription. Requires Zn(2+) as cofactor.

It localises to the plastid. The protein localises to the chloroplast. It catalyses the reaction RNA(n) + a ribonucleoside 5'-triphosphate = RNA(n+1) + diphosphate. Functionally, DNA-dependent RNA polymerase catalyzes the transcription of DNA into RNA using the four ribonucleoside triphosphates as substrates. In Pyropia yezoensis (Susabi-nori), this protein is DNA-directed RNA polymerase subunit beta''.